The chain runs to 473 residues: Arginine biosynthesis bifunctional protein ArgJ, mitochondrial (473 aa).

Substrate contacts are provided by Thr201, Lys230, Thr241, Glu328, Asn468, and Thr473. Catalysis depends on Thr241, which acts as the Nucleophile.

This sequence belongs to the ArgJ family. Heterodimer of an alpha and a beta chain. The alpha and beta chains are autoproteolytically processed from a single precursor protein within the mitochondrion.

The protein resides in the mitochondrion matrix. The enzyme catalyses N(2)-acetyl-L-ornithine + L-glutamate = N-acetyl-L-glutamate + L-ornithine. It carries out the reaction L-glutamate + acetyl-CoA = N-acetyl-L-glutamate + CoA + H(+). It participates in amino-acid biosynthesis; L-arginine biosynthesis; L-ornithine and N-acetyl-L-glutamate from L-glutamate and N(2)-acetyl-L-ornithine (cyclic): step 1/1. The protein operates within amino-acid biosynthesis; L-arginine biosynthesis; N(2)-acetyl-L-ornithine from L-glutamate: step 1/4. Its function is as follows. Catalyzes two activities which are involved in the cyclic version of arginine biosynthesis: the synthesis of acetylglutamate from glutamate and acetyl-CoA, and of ornithine by transacetylation between acetylornithine and glutamate. This chain is Arginine biosynthesis bifunctional protein ArgJ, mitochondrial, found in Paracoccidioides brasiliensis (strain Pb18).